The primary structure comprises 550 residues: Cytokinin dehydrogenase 10 (550 aa).

An N-terminal signal peptide occupies residues 1–26; it reads MMPRAQLTTFLIVTSFLSTVPYLRAP. The region spanning 64–245 is the FAD-binding PCMH-type domain; it reads VHATPNGVFR…TRARIRLEPA (182 aa). Residues G100, K101, and G102 each coordinate FAD. Position 103 is a pros-8alpha-FAD histidine (H103). FAD contacts are provided by S104, Q108, D169, T174, S180, I184, and I235. N289 carries an N-linked (GlcNAc...) asparagine glycan. FAD is bound by residues Y489, S524, and Q527. The tract at residues 523 to 550 is disordered; the sequence is LSPGQGIFPPPPPPSPPPPAAGEPITAS. Pro residues predominate over residues 530–543; sequence FPPPPPPSPPPPAA.

This sequence belongs to the oxygen-dependent FAD-linked oxidoreductase family. As to quaternary structure, monomer. It depends on FAD as a cofactor.

The protein resides in the secreted. It localises to the extracellular space. The enzyme catalyses N(6)-dimethylallyladenine + A + H2O = 3-methyl-2-butenal + adenine + AH2. In terms of biological role, catalyzes the oxidation of cytokinins, a family of N(6)-substituted adenine derivatives that are plant hormones, where the substituent is an isopentenyl group. The protein is Cytokinin dehydrogenase 10 (CKX10) of Oryza sativa subsp. japonica (Rice).